A 574-amino-acid chain; its full sequence is 4-oxocyclohexanecarboxylate 2-dehydrogenase (574 aa).

This sequence belongs to the FAD-dependent oxidoreductase 2 family. As to quaternary structure, monomer. Homodimer. Requires FAD as cofactor.

The enzyme catalyses 4-oxocyclohexane-1-carboxylate + O2 = 4-oxocyclohex-2-ene-1-carboxylate + H2O2. Its activity is regulated as follows. Inhibited by 5,5'-dithio-bis(2- nitrobenzoate) and N-bromosuccinimide, but not by thiol and chelating reagents. In terms of biological role, desaturase involved in a cyclohexanecarboxylate (CHCA) degradation pathway. Catalyzes the conversion of 4-oxocyclohexanecarboxylate (4-oxoCHCA) to 4-oxocyclohexenecarboxylate. Is highly specific for 4-oxocyclohexanecarboxylic acid and shows only slight activity with 4-oxo-2-methylcyclohex-2-enecarboxylic acid. The sequence is that of 4-oxocyclohexanecarboxylate 2-dehydrogenase from Sinomonas cyclohexanicum (Corynebacterium cyclohexanicum).